Here is a 271-residue protein sequence, read N- to C-terminus: ATP synthase subunit a (271 aa).

A run of 5 helical transmembrane segments spans residues 38–58, 100–120, 146–166, 220–240, and 242–262; these read FWTL…LFLV, LIAP…LMDL, DVNI…FYSI, LIFI…LNVP, and AIFH…LTIV.

Belongs to the ATPase A chain family. In terms of assembly, F-type ATPases have 2 components, CF(1) - the catalytic core - and CF(0) - the membrane proton channel. CF(1) has five subunits: alpha(3), beta(3), gamma(1), delta(1), epsilon(1). CF(0) has three main subunits: a(1), b(2) and c(9-12). The alpha and beta chains form an alternating ring which encloses part of the gamma chain. CF(1) is attached to CF(0) by a central stalk formed by the gamma and epsilon chains, while a peripheral stalk is formed by the delta and b chains.

The protein resides in the cell inner membrane. Its function is as follows. Key component of the proton channel; it plays a direct role in the translocation of protons across the membrane. This Salmonella arizonae (strain ATCC BAA-731 / CDC346-86 / RSK2980) protein is ATP synthase subunit a.